The chain runs to 77 residues: Large ribosomal subunit protein eL13 (77 aa).

The protein belongs to the eukaryotic ribosomal protein eL13 family.

The protein is Large ribosomal subunit protein eL13 of Sulfurisphaera tokodaii (strain DSM 16993 / JCM 10545 / NBRC 100140 / 7) (Sulfolobus tokodaii).